The sequence spans 439 residues: tRNA-2-methylthio-N(6)-dimethylallyladenosine synthase (439 aa).

Residues 2 to 119 (KYIYIKTWGC…LPKMIDEVEK (118 aa)) enclose the MTTase N-terminal domain. Residues C11, C48, C82, C156, C160, and C163 each coordinate [4Fe-4S] cluster. Residues 142-374 (KKKGYTADIS…QERINIQTML (233 aa)) enclose the Radical SAM core domain. Positions 377-439 (RKMFGSIQSV…HTHSLKGELF (63 aa)) constitute a TRAM domain.

The protein belongs to the methylthiotransferase family. MiaB subfamily. As to quaternary structure, monomer. [4Fe-4S] cluster is required as a cofactor.

It localises to the cytoplasm. It catalyses the reaction N(6)-dimethylallyladenosine(37) in tRNA + (sulfur carrier)-SH + AH2 + 2 S-adenosyl-L-methionine = 2-methylsulfanyl-N(6)-dimethylallyladenosine(37) in tRNA + (sulfur carrier)-H + 5'-deoxyadenosine + L-methionine + A + S-adenosyl-L-homocysteine + 2 H(+). Functionally, catalyzes the methylthiolation of N6-(dimethylallyl)adenosine (i(6)A), leading to the formation of 2-methylthio-N6-(dimethylallyl)adenosine (ms(2)i(6)A) at position 37 in tRNAs that read codons beginning with uridine. The sequence is that of tRNA-2-methylthio-N(6)-dimethylallyladenosine synthase from Buchnera aphidicola subsp. Acyrthosiphon pisum (strain APS) (Acyrthosiphon pisum symbiotic bacterium).